A 430-amino-acid chain; its full sequence is Trigger factor (430 aa).

Residues 157–242 (GDLVALETWS…AVEVSEPVLP (86 aa)) enclose the PPIase FKBP-type domain.

It belongs to the FKBP-type PPIase family. Tig subfamily.

It localises to the cytoplasm. The enzyme catalyses [protein]-peptidylproline (omega=180) = [protein]-peptidylproline (omega=0). Functionally, involved in protein export. Acts as a chaperone by maintaining the newly synthesized protein in an open conformation. Functions as a peptidyl-prolyl cis-trans isomerase. This is Trigger factor from Xanthomonas campestris pv. campestris (strain B100).